Here is a 302-residue protein sequence, read N- to C-terminus: Succinate--CoA ligase [ADP-forming] subunit alpha (302 aa).

CoA is bound by residues 17–20 (TGST), Lys-43, and 96–98 (ITE). Tyr-159 serves as a coordination point for substrate. The active-site Tele-phosphohistidine intermediate is the His-247.

This sequence belongs to the succinate/malate CoA ligase alpha subunit family. In terms of assembly, heterotetramer of two alpha and two beta subunits.

It carries out the reaction succinate + ATP + CoA = succinyl-CoA + ADP + phosphate. The enzyme catalyses GTP + succinate + CoA = succinyl-CoA + GDP + phosphate. It participates in carbohydrate metabolism; tricarboxylic acid cycle; succinate from succinyl-CoA (ligase route): step 1/1. Functionally, succinyl-CoA synthetase functions in the citric acid cycle (TCA), coupling the hydrolysis of succinyl-CoA to the synthesis of either ATP or GTP and thus represents the only step of substrate-level phosphorylation in the TCA. The alpha subunit of the enzyme binds the substrates coenzyme A and phosphate, while succinate binding and nucleotide specificity is provided by the beta subunit. The chain is Succinate--CoA ligase [ADP-forming] subunit alpha from Staphylococcus aureus (strain COL).